We begin with the raw amino-acid sequence, 88 residues long: Small ribosomal subunit protein bS20 (88 aa).

A disordered region spans residues M1–K22.

Belongs to the bacterial ribosomal protein bS20 family.

Functionally, binds directly to 16S ribosomal RNA. The polypeptide is Small ribosomal subunit protein bS20 (Bartonella bacilliformis (strain ATCC 35685 / KC583 / Herrer 020/F12,63)).